The primary structure comprises 228 residues: Cytidylate kinase (228 aa).

Glycine 17–threonine 25 is an ATP binding site.

This sequence belongs to the cytidylate kinase family. Type 1 subfamily.

It localises to the cytoplasm. The catalysed reaction is CMP + ATP = CDP + ADP. It carries out the reaction dCMP + ATP = dCDP + ADP. The protein is Cytidylate kinase of Burkholderia pseudomallei (strain 1106a).